A 107-amino-acid polypeptide reads, in one-letter code: Small ribosomal subunit protein uS10 (107 aa).

The protein belongs to the universal ribosomal protein uS10 family. As to quaternary structure, part of the 30S ribosomal subunit.

In terms of biological role, involved in the binding of tRNA to the ribosomes. The protein is Small ribosomal subunit protein uS10 of Deinococcus geothermalis (strain DSM 11300 / CIP 105573 / AG-3a).